A 340-amino-acid chain; its full sequence is UDP-3-O-acylglucosamine N-acyltransferase (340 aa).

H237 serves as the catalytic Proton acceptor.

The protein belongs to the transferase hexapeptide repeat family. LpxD subfamily. In terms of assembly, homotrimer.

The catalysed reaction is a UDP-3-O-[(3R)-3-hydroxyacyl]-alpha-D-glucosamine + a (3R)-hydroxyacyl-[ACP] = a UDP-2-N,3-O-bis[(3R)-3-hydroxyacyl]-alpha-D-glucosamine + holo-[ACP] + H(+). Its pathway is bacterial outer membrane biogenesis; LPS lipid A biosynthesis. Functionally, catalyzes the N-acylation of UDP-3-O-acylglucosamine using 3-hydroxyacyl-ACP as the acyl donor. Is involved in the biosynthesis of lipid A, a phosphorylated glycolipid that anchors the lipopolysaccharide to the outer membrane of the cell. The chain is UDP-3-O-acylglucosamine N-acyltransferase from Desulfosudis oleivorans (strain DSM 6200 / JCM 39069 / Hxd3) (Desulfococcus oleovorans).